The primary structure comprises 222 residues: Glutathione S-transferase alpha-1 (222 aa).

Met1 is modified (N-acetylmethionine). The GST N-terminal domain occupies 3–83; the sequence is GKPVLHYFNA…YIATKYDLYG (81 aa). The residue at position 4 (Lys4) is an N6-succinyllysine. Glutathione-binding positions include Tyr9, Lys45, 54-55, and 67-68; these read QV and QT. Positions 85-208 constitute a GST C-terminal domain; sequence DMKERALIDM…QPGSQRKLPV (124 aa).

The protein belongs to the GST superfamily. Alpha family. In terms of assembly, homodimer. Homodimer or heterodimer of GSTA1 and GSTA2.

It is found in the cytoplasm. It catalyses the reaction RX + glutathione = an S-substituted glutathione + a halide anion + H(+). The catalysed reaction is prostaglandin A2 + glutathione = prostaglandin A2-S-(R)-glutathione. It carries out the reaction prostaglandin J2 + glutathione = prostaglandin J2-S-(R)-glutathione. The enzyme catalyses (13S)-hydroperoxy-(9Z,11E)-octadecadienoate + 2 glutathione = (13S)-hydroxy-(9Z,11E)-octadecadienoate + glutathione disulfide + H2O. It catalyses the reaction androst-5-ene-3,17-dione = androst-4-ene-3,17-dione. Functionally, glutathione S-transferase that catalyzes the nucleophilic attack of the sulfur atom of glutathione on the electrophilic groups of a wide range of exogenous and endogenous compounds. Involved in the formation of glutathione conjugates of both prostaglandin A2 (PGA2) and prostaglandin J2 (PGJ2). It also catalyzes the isomerization of D5-androstene-3,17-dione (AD) into D4-androstene-3,17-dione and may therefore play an important role in hormone biosynthesis. Through its glutathione-dependent peroxidase activity toward the fatty acid hydroperoxide (13S)-hydroperoxy-(9Z,11E)-octadecadienoate/13-HPODE it is also involved in the metabolism of oxidized linoleic acid. This Rattus norvegicus (Rat) protein is Glutathione S-transferase alpha-1 (Gsta1).